A 288-amino-acid polypeptide reads, in one-letter code: Peroxisomal membrane protein pex13 (288 aa).

Residues 1–32 (METNQNEKGPSLPSYPAGGIMSVSNSNADTNQ) are disordered. Residues 22–32 (SVSNSNADTNQ) are compositionally biased toward polar residues. Residues 178 to 198 (IYSIVSSLAIILGLVGLPYAI) traverse the membrane as a helical segment. The SH3 domain occupies 222 to 288 (DSLEFCKADY…PSNYCSIISR (67 aa)).

This sequence belongs to the peroxin-13 family. In terms of assembly, interacts (via SH3 domain) with PEX14 (via SH3-binding motif); forming the PEX13-PEX14 docking complex.

It localises to the peroxisome membrane. In terms of biological role, component of the PEX13-PEX14 docking complex, a translocon channel that specifically mediates the import of peroxisomal cargo proteins bound to PEX5 receptor. The PEX13-PEX14 docking complex forms a large import pore which can be opened to a diameter of about 9 nm. Mechanistically, PEX5 receptor along with cargo proteins associates with the PEX14 subunit of the PEX13-PEX14 docking complex in the cytosol, leading to the insertion of the receptor into the organelle membrane with the concomitant translocation of the cargo into the peroxisome matrix. The protein is Peroxisomal membrane protein pex13 (pex13) of Schizosaccharomyces pombe (strain 972 / ATCC 24843) (Fission yeast).